The sequence spans 183 residues: Peptide deformylase (183 aa).

Residues Cys-111 and His-154 each contribute to the Fe cation site. Residue Glu-155 is part of the active site. Fe cation is bound at residue His-158.

This sequence belongs to the polypeptide deformylase family. Requires Fe(2+) as cofactor.

The enzyme catalyses N-terminal N-formyl-L-methionyl-[peptide] + H2O = N-terminal L-methionyl-[peptide] + formate. Functionally, removes the formyl group from the N-terminal Met of newly synthesized proteins. Requires at least a dipeptide for an efficient rate of reaction. N-terminal L-methionine is a prerequisite for activity but the enzyme has broad specificity at other positions. In Staphylococcus aureus (strain COL), this protein is Peptide deformylase.